Consider the following 580-residue polypeptide: Malto-oligosyltrehalose trehalohydrolase (580 aa).

The disordered stretch occupies residues 56 to 88 (LPDPRSARQPDGVHARSQRWEPPGQFGAARTDT). Residues 60–69 (RSARQPDGVH) show a composition bias toward basic and acidic residues. A substrate-binding site is contributed by 245 to 250 (RLDAVH). Residue Asp-247 is the Nucleophile of the active site. Glu-284 acts as the Proton donor in catalysis. Substrate contacts are provided by residues 309–313 (DDIHH) and 379–384 (HDQVGN).

Belongs to the glycosyl hydrolase 13 family.

It localises to the cytoplasm. The catalysed reaction is hydrolysis of (1-&gt;4)-alpha-D-glucosidic linkage in 4-alpha-D-[(1-&gt;4)-alpha-D-glucanosyl]n trehalose to yield trehalose and (1-&gt;4)-alpha-D-glucan.. Its pathway is glycan biosynthesis; trehalose biosynthesis. Functionally, is involved in the biosynthesis of trehalose but not in that of capsular glucan and glycogen. The sequence is that of Malto-oligosyltrehalose trehalohydrolase (treZ) from Mycobacterium tuberculosis (strain CDC 1551 / Oshkosh).